A 314-amino-acid polypeptide reads, in one-letter code: Taste receptor type 2 member 42 (314 aa).

The Extracellular portion of the chain corresponds to 1–7 (MATEMDK). Residues 8–28 (IFLTLATVEFIIGMLGNVFIG) traverse the membrane as a helical segment. The Cytoplasmic portion of the chain corresponds to 29–50 (LVNCSEGIKNQKVFSVDFILTC). The helical transmembrane segment at 51–71 (LAISTIGHLLVILFDSCVVGL) threads the bilayer. Residues 72-101 (APHLYATDRVRRPVTMLWHMXNHLTTWLAT) are Extracellular-facing. The helical transmembrane segment at 102–122 (CLSIFYFFKIAHFPHSLFLWL) threads the bilayer. The Cytoplasmic portion of the chain corresponds to 123–127 (RWRMN). A helical membrane pass occupies residues 128–148 (RVIAILLTLSLFLLIFDCLVL). Over 149–187 (EMFIDXSLNIIDKSNLTLYLDESKTPYDKLSLLKILLSL) the chain is Extracellular. Asn163 carries N-linked (GlcNAc...) asparagine glycosylation. The helical transmembrane segment at 188–208 (NSFIPFSLCLTSLLFLFLSLV) threads the bilayer. Residues 209–238 (RHTRNLKLSSLGSRDSSTEAHRRAMKMVMS) are Cytoplasmic-facing. Residues 239–259 (LLFLFIVHFFSLQVANWTFCI) traverse the membrane as a helical segment. At 260–265 (LGNNKY) the chain is on the extracellular side. Residues 266–286 (TQFVTLALHAFPSCHSFILIL) form a helical membrane-spanning segment. Topologically, residues 287-314 (GNSKLRQTAVRLLWHLRNYTKRPNPLPL) are cytoplasmic.

Belongs to the G-protein coupled receptor T2R family.

It localises to the membrane. Its function is as follows. Receptor that may play a role in the perception of bitterness and is gustducin-linked. May play a role in sensing the chemical composition of the gastrointestinal content. The activity of this receptor may stimulate alpha gustducin, mediate PLC-beta-2 activation and lead to the gating of TRPM5. This is Taste receptor type 2 member 42 (TAS2R42) from Macaca mulatta (Rhesus macaque).